The primary structure comprises 203 residues: E3 ubiquitin-protein ligase RNF152 (203 aa).

The segment at 12–55 (CQICFNYYSPRRRPKLLDCKHTCCSVCLQQMRTSQKDVRCPWCR) adopts an RING-type zinc-finger fold. A necessary for interaction with RRAGA region spans residues 106-165 (ISKERALLPGDMGCRLLPGSQQKSVTVVTVPAEQRPLQGGAPQEAVEEEPDRRGVAKSST). The chain crosses the membrane as a helical span at residues 167-187 (SGVCTVILVACVLVFLLGIVL).

This sequence belongs to the RNF152 family. As to quaternary structure, interacts with RRAGA (inactive GDP-bound form); stimulated by amino acid starvation. Ubiquitinated. Autoubiquitinated in vitro, leading to its degradation by the proteasome.

Its subcellular location is the lysosome membrane. The enzyme catalyses S-ubiquitinyl-[E2 ubiquitin-conjugating enzyme]-L-cysteine + [acceptor protein]-L-lysine = [E2 ubiquitin-conjugating enzyme]-L-cysteine + N(6)-ubiquitinyl-[acceptor protein]-L-lysine.. It participates in protein modification; protein ubiquitination. In terms of biological role, E3 ubiquitin-protein ligase that acts as a negative regulator of mTORC1 signaling by mediating ubiquitination of RagA/RRAGA and RHEB. Catalyzes 'Lys-63'-linked polyubiquitination of RagA/RRAGA in response to amino acid starvation, thereby regulating mTORC1 signaling. Also mediates monoubiquitination of RHEB, promoting its association with the TSC-TBC complex and subsequent inhibition. Also mediates 'Lys-48'-linked polyubiquitination of target proteins and their subsequent targeting to the proteasome for degradation. Induces apoptosis when overexpressed. The chain is E3 ubiquitin-protein ligase RNF152 from Ailuropoda melanoleuca (Giant panda).